The following is a 144-amino-acid chain: MSTFMAKAEDVERKWYVIDAADKPLGRVASEAARLLRGKHKPIFTPHVDTGDHVIIINAEKVALTGKKLTQKLYYHHSRYPGGMTLINYGTLLKTRPERAVEKAIKGMLPKNRLGEQMYRKLNVYKGEAHPHQAQKPEAWTIRD.

This sequence belongs to the universal ribosomal protein uL13 family. As to quaternary structure, part of the 50S ribosomal subunit.

Its function is as follows. This protein is one of the early assembly proteins of the 50S ribosomal subunit, although it is not seen to bind rRNA by itself. It is important during the early stages of 50S assembly. This Heliobacterium modesticaldum (strain ATCC 51547 / Ice1) protein is Large ribosomal subunit protein uL13.